Consider the following 58-residue polypeptide: Small ribosomal subunit protein bS21 (58 aa).

This sequence belongs to the bacterial ribosomal protein bS21 family.

The sequence is that of Small ribosomal subunit protein bS21 from Prochlorococcus marinus (strain MIT 9515).